The following is a 464-amino-acid chain: Serine/threonine-protein kinase 38-like (464 aa).

At Ala2 the chain carries N-acetylalanine. The interval 63-88 is S100B binding; it reads KKLRRSQHARKETEFLRLKRTRLGLD. Residue Thr75 is modified to Phosphothreonine. The Protein kinase domain maps to 90-383; the sequence is FESLKVIGRG…VEEIKGHPFF (294 aa). Residues 96–104 and Lys119 contribute to the ATP site; that span reads IGRGAFGEV. Residue Asp213 is the Proton acceptor of the active site. At Ser282 the chain carries Phosphoserine; by autocatalysis. Residues 384–453 form the AGC-kinase C-terminal domain; sequence EGVDWEHIRE…KRFEGLTQRG (70 aa). A Phosphothreonine; by STK24/MST3 modification is found at Thr442.

Belongs to the protein kinase superfamily. AGC Ser/Thr protein kinase family. As to quaternary structure, homodimeric S100B binds two molecules of STK38L. Interacts with MICAL1; leading to inhibit the protein kinase activity by antagonizing activation by MST1/STK4. Interacts with MOB1 and MOB2. The cofactor is Mg(2+). Ubiquitously expressed with highest levels observed in the thymus.

Its subcellular location is the cytoplasm. It localises to the cytoskeleton. The protein localises to the membrane. It catalyses the reaction L-seryl-[protein] + ATP = O-phospho-L-seryl-[protein] + ADP + H(+). The catalysed reaction is L-threonyl-[protein] + ATP = O-phospho-L-threonyl-[protein] + ADP + H(+). Activated by binding of S100B which releases autoinhibitory N-lobe interactions, enabling ATP to bind and the autophosphorylation of Ser-282. Thr-442 then undergoes calcium-dependent phosphorylation by STK24/MST3. Interactions between phosphorylated Thr-442 and the N-lobe promote additional structural changes that complete the activation of the kinase. Autoinhibition is also released by the binding of MOB1/MOBKL1A and MOB2/HCCA2 to the N-terminal of STK38L. Its function is as follows. Involved in the regulation of structural processes in differentiating and mature neuronal cells. The polypeptide is Serine/threonine-protein kinase 38-like (Homo sapiens (Human)).